We begin with the raw amino-acid sequence, 408 residues long: LL-diaminopimelate aminotransferase (408 aa).

Positions 15 and 42 each coordinate substrate. Pyridoxal 5'-phosphate contacts are provided by residues Tyr72, 108-109 (SK), Tyr132, Asn187, Tyr218, and 246-248 (SFS). Substrate is bound by residues Lys109, Tyr132, and Asn187. Lys249 is modified (N6-(pyridoxal phosphate)lysine). 2 residues coordinate pyridoxal 5'-phosphate: Arg257 and Asn292. Substrate contacts are provided by Asn292 and Arg388.

Belongs to the class-I pyridoxal-phosphate-dependent aminotransferase family. LL-diaminopimelate aminotransferase subfamily. Homodimer. Pyridoxal 5'-phosphate serves as cofactor.

It catalyses the reaction (2S,6S)-2,6-diaminopimelate + 2-oxoglutarate = (S)-2,3,4,5-tetrahydrodipicolinate + L-glutamate + H2O + H(+). It functions in the pathway amino-acid biosynthesis; L-lysine biosynthesis via DAP pathway; LL-2,6-diaminopimelate from (S)-tetrahydrodipicolinate (aminotransferase route): step 1/1. In terms of biological role, involved in the synthesis of meso-diaminopimelate (m-DAP or DL-DAP), required for both lysine and peptidoglycan biosynthesis. Catalyzes the direct conversion of tetrahydrodipicolinate to LL-diaminopimelate. The sequence is that of LL-diaminopimelate aminotransferase from Synechococcus sp. (strain WH7803).